Here is a 332-residue protein sequence, read N- to C-terminus: Methionyl-tRNA formyltransferase (332 aa).

(6S)-5,6,7,8-tetrahydrofolate is bound at residue 124-127 (SLLP).

Belongs to the Fmt family.

The catalysed reaction is L-methionyl-tRNA(fMet) + (6R)-10-formyltetrahydrofolate = N-formyl-L-methionyl-tRNA(fMet) + (6S)-5,6,7,8-tetrahydrofolate + H(+). Attaches a formyl group to the free amino group of methionyl-tRNA(fMet). The formyl group appears to play a dual role in the initiator identity of N-formylmethionyl-tRNA by promoting its recognition by IF2 and preventing the misappropriation of this tRNA by the elongation apparatus. The protein is Methionyl-tRNA formyltransferase of Polynucleobacter asymbioticus (strain DSM 18221 / CIP 109841 / QLW-P1DMWA-1) (Polynucleobacter necessarius subsp. asymbioticus).